The chain runs to 311 residues: MHEIYLAGGCFWGVEEYFSRVPGVTDAVSGYANGRGETTKYELINQTGHAETVHVTYDAKQISLKEILLHYFRIINPTSKNKQGNDVGTQYRTGVYYTDDKDLEVINQVFDEVAKKYDQPLAVEKENLKNFVVAEDYHQDYLKKNPNGYCHINVNQAAYPVIDASKYPKPSDEELKKTLSPEEYAVTQENQTERAFSNRYWDKFESGIYVDIATGEPLFSSKDKFESGCGWPSFTQPISPDVVTYKEDKSYNMTRMEVRSRVGDSHLGHVFTDGPQDKGGLRYCINSLSIRFIPKDQMEEKGYAYLLDYVD.

A peptide methionine sulfoxide reductase A region spans residues 1–155 (MHEIYLAGGC…PNGYCHINVN (155 aa)). Residue Cys10 is part of the active site. In terms of domain architecture, MsrB spans 172-295 (DEELKKTLSP…NSLSIRFIPK (124 aa)). The active-site Nucleophile is Cys284.

The protein in the N-terminal section; belongs to the MsrA Met sulfoxide reductase family. This sequence in the C-terminal section; belongs to the MsrB Met sulfoxide reductase family.

It catalyses the reaction L-methionyl-[protein] + [thioredoxin]-disulfide + H2O = L-methionyl-(S)-S-oxide-[protein] + [thioredoxin]-dithiol. It carries out the reaction [thioredoxin]-disulfide + L-methionine + H2O = L-methionine (S)-S-oxide + [thioredoxin]-dithiol. The enzyme catalyses L-methionyl-[protein] + [thioredoxin]-disulfide + H2O = L-methionyl-(R)-S-oxide-[protein] + [thioredoxin]-dithiol. Has an important function as a repair enzyme for proteins that have been inactivated by oxidation. Catalyzes the reversible oxidation-reduction of methionine sulfoxide in proteins to methionine. The polypeptide is Peptide methionine sulfoxide reductase MsrA/MsrB 2 (msrAB2) (Streptococcus pneumoniae serotype 4 (strain ATCC BAA-334 / TIGR4)).